The sequence spans 364 residues: Protein MGF 360-21R (364 aa).

Belongs to the asfivirus MGF 360 family.

In terms of biological role, plays a role in virus cell tropism, and may be required for efficient virus replication in macrophages. The polypeptide is Protein MGF 360-21R (African swine fever virus (isolate Pig/Kenya/KEN-50/1950) (ASFV)).